The following is a 92-amino-acid chain: Protein S100-B (92 aa).

Residue Ser2 is modified to N-acetylserine. EF-hand domains are found at residues 13–48 (DVFHQYSGREGDKHKLKKSELKELINNELSHFLEEI) and 49–84 (KEQEVVDKVMETLDEDGDGECDFQEFMAFVSMVTTA). Residue His16 coordinates Zn(2+). Ca(2+) contacts are provided by Ser19 and Glu22. Zn(2+) is bound at residue His26. Residues Lys27, Glu32, Asp62, Asp64, Asp66, Glu68, and Glu73 each coordinate Ca(2+). Zn(2+) is bound by residues His86 and His91.

The protein belongs to the S-100 family. As to quaternary structure, dimer of either two alpha chains, or two beta chains, or one alpha and one beta chain. The S100B dimer binds two molecules of STK38. Interacts with CACYBP in a calcium-dependent manner. Interacts with ATAD3A; this interaction probably occurs in the cytosol prior to ATAD3A mitochondrial targeting. Interacts with S100A6. The S100B dimer interacts with two molecules of CAPZA1. Interacts with AGER. Interacts with PPP5C (via TPR repeats); the interaction is calcium-dependent and modulates PPP5C activity. Interacts with TPPP; this interaction inhibits TPPP dimerization. Interacts with isoform CLSTN3beta of CLSTN3; interaction promotes secretion. As to expression, although predominant among the water-soluble brain proteins, S100 is also found in a variety of other tissues.

The protein localises to the cytoplasm. Its subcellular location is the nucleus. It is found in the secreted. Functionally, small zinc- and- and calcium-binding protein that is highly expressed in astrocytes and constitutes one of the most abundant soluble proteins in brain. Weakly binds calcium but binds zinc very tightly-distinct binding sites with different affinities exist for both ions on each monomer. Physiological concentrations of potassium ion antagonize the binding of both divalent cations, especially affecting high-affinity calcium-binding sites. Acts as a neurotrophic factor that promotes astrocytosis and axonal proliferation. Involved in innervation of thermogenic adipose tissue by acting as an adipocyte-derived neurotrophic factor that promotes sympathetic innervation of adipose tissue. Binds to and initiates the activation of STK38 by releasing autoinhibitory intramolecular interactions within the kinase. Interaction with AGER after myocardial infarction may play a role in myocyte apoptosis by activating ERK1/2 and p53/TP53 signaling. Could assist ATAD3A cytoplasmic processing, preventing aggregation and favoring mitochondrial localization. May mediate calcium-dependent regulation on many physiological processes by interacting with other proteins, such as TPR-containing proteins, and modulating their activity. The chain is Protein S100-B from Rattus norvegicus (Rat).